A 227-amino-acid chain; its full sequence is Large ribosomal subunit protein uL3 (227 aa).

Gln158 is modified (N5-methylglutamine).

Belongs to the universal ribosomal protein uL3 family. In terms of assembly, part of the 50S ribosomal subunit. Forms a cluster with proteins L14 and L19. Post-translationally, methylated by PrmB.

One of the primary rRNA binding proteins, it binds directly near the 3'-end of the 23S rRNA, where it nucleates assembly of the 50S subunit. In Polaromonas sp. (strain JS666 / ATCC BAA-500), this protein is Large ribosomal subunit protein uL3.